A 220-amino-acid chain; its full sequence is MTQETLRKLWITLAILTLVVMINIHGSTQKSDFALIIKLPIELKFDGELTREAYAVHGMRFFALFFWLVPFLAVYHAKRSSGSASEAFPFRLLDIEPRSRPGKWVQGIAFVVLICLPLLTAIHLWRIVVGMQVCQHVSNALVNCADIWSRPVNAGPWDDTYRLANWGPTYDPLVEPVLAVILTAVSVYLTLRLVIEMRRAGSRPVATGNTPAEPITTSVT.

Helical transmembrane passes span 9–29 (LWIT…GSTQ), 54–74 (YAVH…FLAV), 105–125 (VQGI…IHLW), and 177–197 (VLAV…VIEM).

It is found in the cell membrane. This is an uncharacterized protein from Sinorhizobium fredii (strain NBRC 101917 / NGR234).